The following is a 574-amino-acid chain: Putative dehydratase IlvD1 (574 aa).

[4Fe-4S] cluster-binding residues include C124 and C197.

The protein belongs to the IlvD/Edd family. The cofactor is [4Fe-4S] cluster.

Its function is as follows. Involved in the degradation of galactose via the DeLey-Doudoroff pathway. The chain is Putative dehydratase IlvD1 (ilvD1) from Rhizobium meliloti (strain 1021) (Ensifer meliloti).